A 488-amino-acid chain; its full sequence is N-succinylglutamate 5-semialdehyde dehydrogenase (488 aa).

221–226 (GSSRTG) lines the NAD(+) pocket. Catalysis depends on residues glutamate 244 and cysteine 278.

This sequence belongs to the aldehyde dehydrogenase family. AstD subfamily.

It carries out the reaction N-succinyl-L-glutamate 5-semialdehyde + NAD(+) + H2O = N-succinyl-L-glutamate + NADH + 2 H(+). It functions in the pathway amino-acid degradation; L-arginine degradation via AST pathway; L-glutamate and succinate from L-arginine: step 4/5. Its function is as follows. Catalyzes the NAD-dependent reduction of succinylglutamate semialdehyde into succinylglutamate. The chain is N-succinylglutamate 5-semialdehyde dehydrogenase from Pseudomonas fluorescens (strain ATCC BAA-477 / NRRL B-23932 / Pf-5).